The sequence spans 61 residues: Metallothionein-I, hippocampal (61 aa).

The residue at position 1 (Met-1) is an N-acetylmethionine. Positions 1 to 29 (MDPNCSCATGDSCACASTCKCKECKCTSC) are beta. A divalent metal cation is bound by residues Cys-5, Cys-7, Cys-13, Cys-15, Cys-19, Cys-21, Cys-24, Cys-26, Cys-29, Cys-33, Cys-34, Cys-36, Cys-37, Cys-41, Cys-44, Cys-48, Cys-50, and Cys-57. Residues 30 to 61 (KKSCCSCCPVGCAKCAQGCICKGASDKCSCCA) form an alpha region. Ser-58 bears the Phosphoserine mark. A divalent metal cation-binding residues include Cys-59 and Cys-60.

The protein belongs to the metallothionein superfamily. Type 1 family.

Its function is as follows. Metallothioneins have a high content of cysteine residues that bind various heavy metals; these proteins are transcriptionally regulated by both heavy metals and glucocorticoids. This isoform may play a role in regulating the transport, accumulation, and compartmentation of zinc in the hippocampus. This is Metallothionein-I, hippocampal from Bos taurus (Bovine).